The chain runs to 97 residues: UPF0235 protein Aasi_0294 (97 aa).

It belongs to the UPF0235 family.

The polypeptide is UPF0235 protein Aasi_0294 (Amoebophilus asiaticus (strain 5a2)).